The primary structure comprises 411 residues: LL-diaminopimelate aminotransferase (411 aa).

Substrate is bound by residues Tyr-15 and Gly-42. Pyridoxal 5'-phosphate contacts are provided by residues Tyr-72, 108–109, Tyr-132, Asn-187, Tyr-218, and 246–248; these read SK and SFS. The substrate site is built by Lys-109, Tyr-132, and Asn-187. Lys-249 is modified (N6-(pyridoxal phosphate)lysine). Arg-257 and Asn-292 together coordinate pyridoxal 5'-phosphate. The substrate site is built by Asn-292 and Arg-388.

It belongs to the class-I pyridoxal-phosphate-dependent aminotransferase family. LL-diaminopimelate aminotransferase subfamily. In terms of assembly, homodimer. Pyridoxal 5'-phosphate is required as a cofactor.

The catalysed reaction is (2S,6S)-2,6-diaminopimelate + 2-oxoglutarate = (S)-2,3,4,5-tetrahydrodipicolinate + L-glutamate + H2O + H(+). It participates in amino-acid biosynthesis; L-lysine biosynthesis via DAP pathway; LL-2,6-diaminopimelate from (S)-tetrahydrodipicolinate (aminotransferase route): step 1/1. Involved in the synthesis of meso-diaminopimelate (m-DAP or DL-DAP), required for both lysine and peptidoglycan biosynthesis. Catalyzes the direct conversion of tetrahydrodipicolinate to LL-diaminopimelate. In Geobacter sp. (strain M21), this protein is LL-diaminopimelate aminotransferase.